The chain runs to 488 residues: TOX high mobility group box family member 2 (488 aa).

Positions Y76–L114 are required for transcriptional activation. Disordered regions lie at residues R192–P258, W293–M328, and S363–I473. Over residues G204–T216 the composition is skewed to low complexity. Residues E222 to K239 show a composition bias toward basic and acidic residues. Positions V223–P252 match the Nuclear localization signal motif. The span at K240 to K250 shows a compositional bias: basic residues. Residues P255–P323 constitute a DNA-binding region (HMG box). The segment covering Q302–N316 has biased composition (polar residues). Residues P443–G460 are compositionally biased toward low complexity.

The protein resides in the nucleus. Putative transcriptional activator involved in the hypothalamo-pituitary-gonadal system. This Homo sapiens (Human) protein is TOX high mobility group box family member 2 (TOX2).